A 311-amino-acid chain; its full sequence is Bifunctional protein FolD (311 aa).

174–176 (GKG) contributes to the NADP(+) binding site.

The protein belongs to the tetrahydrofolate dehydrogenase/cyclohydrolase family. In terms of assembly, homodimer.

The enzyme catalyses (6R)-5,10-methylene-5,6,7,8-tetrahydrofolate + NADP(+) = (6R)-5,10-methenyltetrahydrofolate + NADPH. It catalyses the reaction (6R)-5,10-methenyltetrahydrofolate + H2O = (6R)-10-formyltetrahydrofolate + H(+). Its pathway is one-carbon metabolism; tetrahydrofolate interconversion. In terms of biological role, catalyzes the oxidation of 5,10-methylenetetrahydrofolate to 5,10-methenyltetrahydrofolate and then the hydrolysis of 5,10-methenyltetrahydrofolate to 10-formyltetrahydrofolate. The sequence is that of Bifunctional protein FolD from Pyrobaculum aerophilum (strain ATCC 51768 / DSM 7523 / JCM 9630 / CIP 104966 / NBRC 100827 / IM2).